Here is a 535-residue protein sequence, read N- to C-terminus: Beta-amylase (535 aa).

D51, H91, and D99 together coordinate substrate. E184 acts as the Proton donor in catalysis. Residues K293, H298, and T340 each contribute to the substrate site. E378 (proton acceptor) is an active-site residue. Substrate contacts are provided by residues N379–A380 and R418. 3 tandem repeats follow at residues G489 to E499, G500 to K510, and G511 to E521. A 4 X 11 AA tandem repeats region spans residues G489–P532. Residues T513 to M535 form a disordered region. One copy of the 4; approximate repeat lies at D522–P532.

The protein belongs to the glycosyl hydrolase 14 family. Monomer.

The catalysed reaction is Hydrolysis of (1-&gt;4)-alpha-D-glucosidic linkages in polysaccharides so as to remove successive maltose units from the non-reducing ends of the chains.. This is Beta-amylase (BMY1) from Hordeum vulgare (Barley).